The chain runs to 185 residues: Ribosome-recycling factor (185 aa).

The tract at residues 136–159 (NEQLKSQQKDGKMSEDELKRSQDE) is disordered.

This sequence belongs to the RRF family.

It localises to the cytoplasm. Responsible for the release of ribosomes from messenger RNA at the termination of protein biosynthesis. May increase the efficiency of translation by recycling ribosomes from one round of translation to another. The sequence is that of Ribosome-recycling factor from Pelotomaculum thermopropionicum (strain DSM 13744 / JCM 10971 / SI).